The following is a 605-amino-acid chain: Xylan O-acetyltransferase 7 (605 aa).

Over 1–124 (MKKKKNGMGA…AKQPSPRRTP (124 aa)) the chain is Cytoplasmic. Residues 86–126 (PCHLLPIQGQGQMQMQQRRKPPPAAAPVAAKQPSPRRTPGP) are disordered. The helical; Signal-anchor for type II membrane protein transmembrane segment at 125–145 (GPLSFAGALLSLLVVATFLYI) threads the bilayer. The Lumenal portion of the chain corresponds to 146–605 (NDHGNMMPPH…LYAHIVAHAA (460 aa)). N-linked (GlcNAc...) asparagine glycosylation is found at N192 and N218. Intrachain disulfides connect C243–C296, C267–C332, C276–C584, and C499–C580. The GDS motif signature appears at 319 to 321 (GDS). Catalysis depends on S321, which acts as the Nucleophile. N351, N363, N471, and N508 each carry an N-linked (GlcNAc...) asparagine glycan. Residue D579 is the Proton donor of the active site. Residues 579–582 (DCIH) carry the DXXH motif motif. Catalysis depends on H582, which acts as the Proton acceptor.

Belongs to the PC-esterase family. TBL subfamily. Expressed in roots, leaves and stems.

It is found in the golgi apparatus membrane. Xylan acetyltransferase required for 2-O- and 3-O-monoacetylation of xylosyl residues in xylan. Catalyzes the 2-O-acetylation of xylan, followed by nonenzymatic acetyl migration to the O-3 position, resulting in products that are monoacetylated at both O-2 and O-3 positions. This chain is Xylan O-acetyltransferase 7, found in Oryza sativa subsp. japonica (Rice).